The sequence spans 325 residues: MYKQPDKEKWTGRIDSESDEKSFRVHQKIRLLDIGQIQTQAENAFALLGFQCDEGVRRNQGRQGAYHAPVEVKKALANLPWHLPSHTILYDVGEITCEGGELENSQKHLGQAVERLICHNITPVVIGGGHETAYGHYLGVRQAVGSETKLGIINIDAHFDMRPYEQGPSSGTMFRQILDEDGNVGYCCLGIQPLGNTAALFETANRYGCTYVLEEELTLATLERAYEIIDDFIQNYDVLMLTLCMDVLSASAAPGVSAPSPFGLDPKIVRALLRYIISKPQTISFDICEVNPLVDENRKTIALAAAFCMEALVHFHRRQRAATGR.

Mn(2+) contacts are provided by His130, Asp156, His158, Asp160, Cys244, and Asp246.

The protein belongs to the arginase family. Requires Mn(2+) as cofactor.

It carries out the reaction N-formimidoyl-L-glutamate + H2O = formamide + L-glutamate. Its pathway is amino-acid degradation; L-histidine degradation into L-glutamate; L-glutamate from N-formimidoyl-L-glutamate (hydrolase route): step 1/1. Catalyzes the conversion of N-formimidoyl-L-glutamate to L-glutamate and formamide. This chain is Formimidoylglutamase, found in Geobacillus sp. (strain WCH70).